A 351-amino-acid chain; its full sequence is Holliday junction branch migration complex subunit RuvB (351 aa).

The large ATPase domain (RuvB-L) stretch occupies residues Met1–Tyr182. ATP contacts are provided by residues Ile21, Arg22, Gly63, Lys66, Thr67, Thr68, Glu129 to Phe131, Arg172, Tyr182, and Arg219. Residue Thr67 coordinates Mg(2+). The small ATPAse domain (RuvB-S) stretch occupies residues Asn183–Asn253. Positions Arg256–Arg351 are head domain (RuvB-H). Positions 292, 311, and 316 each coordinate DNA. Residues Leu328–Arg351 form a disordered region.

This sequence belongs to the RuvB family. Homohexamer. Forms an RuvA(8)-RuvB(12)-Holliday junction (HJ) complex. HJ DNA is sandwiched between 2 RuvA tetramers; dsDNA enters through RuvA and exits via RuvB. An RuvB hexamer assembles on each DNA strand where it exits the tetramer. Each RuvB hexamer is contacted by two RuvA subunits (via domain III) on 2 adjacent RuvB subunits; this complex drives branch migration. In the full resolvosome a probable DNA-RuvA(4)-RuvB(12)-RuvC(2) complex forms which resolves the HJ.

The protein resides in the cytoplasm. The enzyme catalyses ATP + H2O = ADP + phosphate + H(+). In terms of biological role, the RuvA-RuvB-RuvC complex processes Holliday junction (HJ) DNA during genetic recombination and DNA repair, while the RuvA-RuvB complex plays an important role in the rescue of blocked DNA replication forks via replication fork reversal (RFR). RuvA specifically binds to HJ cruciform DNA, conferring on it an open structure. The RuvB hexamer acts as an ATP-dependent pump, pulling dsDNA into and through the RuvAB complex. RuvB forms 2 homohexamers on either side of HJ DNA bound by 1 or 2 RuvA tetramers; 4 subunits per hexamer contact DNA at a time. Coordinated motions by a converter formed by DNA-disengaged RuvB subunits stimulates ATP hydrolysis and nucleotide exchange. Immobilization of the converter enables RuvB to convert the ATP-contained energy into a lever motion, pulling 2 nucleotides of DNA out of the RuvA tetramer per ATP hydrolyzed, thus driving DNA branch migration. The RuvB motors rotate together with the DNA substrate, which together with the progressing nucleotide cycle form the mechanistic basis for DNA recombination by continuous HJ branch migration. Branch migration allows RuvC to scan DNA until it finds its consensus sequence, where it cleaves and resolves cruciform DNA. This Alkalilimnicola ehrlichii (strain ATCC BAA-1101 / DSM 17681 / MLHE-1) protein is Holliday junction branch migration complex subunit RuvB.